The following is a 219-amino-acid chain: MTDHRTRFLQLALDADALRFGEFTLKSGRLSPYFFNAGRFDSGAKTAQLAQCYADAIDAAGLDFDLLFGPAYKGIPLATALACAYAGRGRDLPLAFNRKEAKDHGEGGTLIGAPLAGRKVLIVDDVITAGTAIREALAIIRAAGGMPSGIVVALDRQEIASDQDRRSAAQAVAAEAGIPVIAVANLGDLLAFAAGNADLVGFQEPLLAYRGRYGTDTTG.

Lysine 26 contacts 5-phospho-alpha-D-ribose 1-diphosphate. 34 to 35 (FF) is an orotate binding site. 5-phospho-alpha-D-ribose 1-diphosphate-binding positions include 72–73 (YK), arginine 98, lysine 99, lysine 102, histidine 104, and 124–132 (DDVITAGTA). Orotate-binding residues include threonine 128 and arginine 156.

It belongs to the purine/pyrimidine phosphoribosyltransferase family. PyrE subfamily. Homodimer. Mg(2+) is required as a cofactor.

It carries out the reaction orotidine 5'-phosphate + diphosphate = orotate + 5-phospho-alpha-D-ribose 1-diphosphate. Its pathway is pyrimidine metabolism; UMP biosynthesis via de novo pathway; UMP from orotate: step 1/2. Its function is as follows. Catalyzes the transfer of a ribosyl phosphate group from 5-phosphoribose 1-diphosphate to orotate, leading to the formation of orotidine monophosphate (OMP). This is Orotate phosphoribosyltransferase from Xanthomonas euvesicatoria pv. vesicatoria (strain 85-10) (Xanthomonas campestris pv. vesicatoria).